Reading from the N-terminus, the 423-residue chain is Serine hydroxymethyltransferase (423 aa).

(6S)-5,6,7,8-tetrahydrofolate contacts are provided by residues leucine 125 and 129–131 (GHL). An N6-(pyridoxal phosphate)lysine modification is found at lysine 234. Glutamate 249 contributes to the (6S)-5,6,7,8-tetrahydrofolate binding site.

The protein belongs to the SHMT family. In terms of assembly, homodimer. Pyridoxal 5'-phosphate serves as cofactor.

Its subcellular location is the cytoplasm. The catalysed reaction is (6R)-5,10-methylene-5,6,7,8-tetrahydrofolate + glycine + H2O = (6S)-5,6,7,8-tetrahydrofolate + L-serine. It functions in the pathway one-carbon metabolism; tetrahydrofolate interconversion. Its pathway is amino-acid biosynthesis; glycine biosynthesis; glycine from L-serine: step 1/1. Its function is as follows. Catalyzes the reversible interconversion of serine and glycine with tetrahydrofolate (THF) serving as the one-carbon carrier. This reaction serves as the major source of one-carbon groups required for the biosynthesis of purines, thymidylate, methionine, and other important biomolecules. Also exhibits THF-independent aldolase activity toward beta-hydroxyamino acids, producing glycine and aldehydes, via a retro-aldol mechanism. This chain is Serine hydroxymethyltransferase, found in Thermobifida fusca (strain YX).